The chain runs to 214 residues: tRNA (guanine-N(7)-)-methyltransferase (214 aa).

4 residues coordinate S-adenosyl-L-methionine: glutamate 43, glutamate 68, aspartate 95, and aspartate 117. Aspartate 117 is an active-site residue. Substrate is bound by residues lysine 121, aspartate 153, and 190 to 193 (TEYE).

It belongs to the class I-like SAM-binding methyltransferase superfamily. TrmB family.

It catalyses the reaction guanosine(46) in tRNA + S-adenosyl-L-methionine = N(7)-methylguanosine(46) in tRNA + S-adenosyl-L-homocysteine. The protein operates within tRNA modification; N(7)-methylguanine-tRNA biosynthesis. Catalyzes the formation of N(7)-methylguanine at position 46 (m7G46) in tRNA. The polypeptide is tRNA (guanine-N(7)-)-methyltransferase (Staphylococcus haemolyticus (strain JCSC1435)).